Here is a 310-residue protein sequence, read N- to C-terminus: Ribose-phosphate pyrophosphokinase (310 aa).

ATP contacts are provided by residues 34–36 (DQE) and 93–94 (RQ). 2 residues coordinate Mg(2+): His-127 and Asp-167. Lys-190 is an active-site residue. D-ribose 5-phosphate is bound by residues Arg-192, Asp-216, and 220-224 (DSGGT).

This sequence belongs to the ribose-phosphate pyrophosphokinase family. Class I subfamily. Homohexamer. Requires Mg(2+) as cofactor.

The protein localises to the cytoplasm. It carries out the reaction D-ribose 5-phosphate + ATP = 5-phospho-alpha-D-ribose 1-diphosphate + AMP + H(+). It functions in the pathway metabolic intermediate biosynthesis; 5-phospho-alpha-D-ribose 1-diphosphate biosynthesis; 5-phospho-alpha-D-ribose 1-diphosphate from D-ribose 5-phosphate (route I): step 1/1. Its function is as follows. Involved in the biosynthesis of the central metabolite phospho-alpha-D-ribosyl-1-pyrophosphate (PRPP) via the transfer of pyrophosphoryl group from ATP to 1-hydroxyl of ribose-5-phosphate (Rib-5-P). This Agrobacterium fabrum (strain C58 / ATCC 33970) (Agrobacterium tumefaciens (strain C58)) protein is Ribose-phosphate pyrophosphokinase.